Consider the following 1085-residue polypeptide: MKKIITLSAPPPSQFSFLSEFQFSLPELRQIQFKSYYYFIYKNLISELNIFPEIFDLNQEFQFELLNKEYKLIKPEKTTIKFHYNTYSSDLYVTCRLLRRKKKIEIQKQTIFIGSIPLIDYQSTFRINSVTRVIINQILRSPGIYYNSELDHNGISIYTGTIISDWGGRLKLEIDSKTRIWARISKKRKVSILVLLLAMGLTIKQILDSVCSSKIFLDFLKEKKKKKEHLQSTEDAMVELYKQLYYIGGDLLFSESIRKELQKKFFQQRCELGKIGRLNVNKKLSLDIPENEFFLLPQDILAAIDYLIKIKFGIGTLDDIDHLKNRRIRSVADLLQDQLKLALIRLENSVRQVMRRTTKRKRLLSPKNLITQTPLIATFKEFFGSHPLSQFLDQTNSLAEIVHKRRLSSLGPGGVTRRTAGFQVRDIHFSHYTRICPIETSEGMNAGLIASLAIHANVNNWGFLESPFYKISKNVKEEKIINLSAGEDEYYRIATGNCLALDQGTQKIQITPARYRQEFLAIAWEQIHLRSIYPLQYFSVGVSLIPFLEHNDANRALMGSNMQRQAVPLIKLEKCIVGTGLESQVALDSGNVMITKQSEKIMYTDGKKISLLNNTNETVNTHLIIYQRSNNSTCIHQKPQVISKKFLKKGQVLTDGAAILKGELTLGKNILVAYMPWEGYNFEDAILISERLIYEDIYTSIHIERYEIESRNTNQGPEKITKEIPHLENSVLRHLDKNGLVIPGSWVETGDVLVGKLTPQETEESLRAPEGKLLQAIFGIQVTNAKETCLKVPLNGKGRVIDVIWISKKENSSNYEKIIHVYIAQKRKIQVGDKVAGRHGNKGIISKILPRQDMPYLQDGTPIDMVLSPLGVPSRMNVGQIFECLLGLAGYFLGKHYRITPFDEKYEREASRKLVFSELYKASKKTGNLWLFEPENPGKSRLLNGRTGEIFEQAVTVGKAYMLKLIHQVDDKIHARSSGPYALVTQQPLRGRSRRGGQRVGEMEVWALEGFGVAYILQEMLTIKSDHIHARYEVLGAIITGEPIPKPKTAPESFLLLVRELRSLSLELDHAVIFEKNLNIKFKDV.

Belongs to the RNA polymerase beta chain family. In terms of assembly, in plastids the minimal PEP RNA polymerase catalytic core is composed of four subunits: alpha, beta, beta', and beta''. When a (nuclear-encoded) sigma factor is associated with the core the holoenzyme is formed, which can initiate transcription.

It is found in the plastid. The protein localises to the chloroplast. The catalysed reaction is RNA(n) + a ribonucleoside 5'-triphosphate = RNA(n+1) + diphosphate. In terms of biological role, DNA-dependent RNA polymerase catalyzes the transcription of DNA into RNA using the four ribonucleoside triphosphates as substrates. This chain is DNA-directed RNA polymerase subunit beta, found in Physcomitrium patens (Spreading-leaved earth moss).